A 407-amino-acid polypeptide reads, in one-letter code: UPF0761 membrane protein AZOSEA40600 (407 aa).

6 consecutive transmembrane segments (helical) span residues 29 to 49 (SLAF…IALF), 92 to 112 (GLTL…LMTI), 132 to 152 (LMVH…SVLA), 174 to 194 (FARL…YYAV), 207 to 227 (GGIA…LFIV), and 239 to 259 (FAVL…ILLG).

The protein belongs to the UPF0761 family.

The protein localises to the cell inner membrane. The polypeptide is UPF0761 membrane protein AZOSEA40600 (Aromatoleum aromaticum (strain DSM 19018 / LMG 30748 / EbN1) (Azoarcus sp. (strain EbN1))).